Reading from the N-terminus, the 331-residue chain is ATP-dependent 6-phosphofructokinase (331 aa).

Gly-12 is an ATP binding site. Residues Arg-22–Arg-26 and Arg-55–Asp-60 contribute to the ADP site. ATP contacts are provided by residues Arg-73–Phe-74 and Gly-103–Ser-106. A Mg(2+)-binding site is contributed by Asp-104. Residue Thr-127–Asp-129 participates in substrate binding. The Proton acceptor role is filled by Asp-129. Residue Arg-156 participates in ADP binding. Residues Arg-164 and Met-171–Arg-173 each bind substrate. ADP is bound by residues Gly-187–Glu-189, Lys-213, and Lys-215–His-217. Substrate is bound by residues Glu-224, Arg-245, and His-251–Arg-254.

The protein belongs to the phosphofructokinase type A (PFKA) family. ATP-dependent PFK group I subfamily. Prokaryotic clade 'B1' sub-subfamily. As to quaternary structure, homotetramer. Mg(2+) serves as cofactor.

It localises to the cytoplasm. It carries out the reaction beta-D-fructose 6-phosphate + ATP = beta-D-fructose 1,6-bisphosphate + ADP + H(+). It functions in the pathway carbohydrate degradation; glycolysis; D-glyceraldehyde 3-phosphate and glycerone phosphate from D-glucose: step 3/4. With respect to regulation, allosterically activated by ADP and other diphosphonucleosides, and allosterically inhibited by phosphoenolpyruvate. In terms of biological role, catalyzes the phosphorylation of D-fructose 6-phosphate to fructose 1,6-bisphosphate by ATP, the first committing step of glycolysis. The chain is ATP-dependent 6-phosphofructokinase from Yersinia enterocolitica serotype O:8 / biotype 1B (strain NCTC 13174 / 8081).